A 154-amino-acid polypeptide reads, in one-letter code: MLKHIDLYTDGSCLGNPGPGGYGAVLVYGDHRKEISGGFRLTTNNRMELMAAIMGLRTLNAACQVRLTTDSQYVRQGITQWIIGWKKKGWMTSNRQPVKNVDLWKELDAEVARHQIEWLWVKGHSGHPENERCDELARDAASGKELAEDTGYQP.

An RNase H type-1 domain is found at Met1–Ser142. Residues Asp10, Glu48, Asp70, and Asp134 each coordinate Mg(2+). The segment covering Gly126–Ala147 has biased composition (basic and acidic residues). The segment at Gly126–Pro154 is disordered.

This sequence belongs to the RNase H family. Monomer. Mg(2+) serves as cofactor.

The protein resides in the cytoplasm. The catalysed reaction is Endonucleolytic cleavage to 5'-phosphomonoester.. Endonuclease that specifically degrades the RNA of RNA-DNA hybrids. The polypeptide is Ribonuclease H (Aeromonas salmonicida (strain A449)).